A 272-amino-acid polypeptide reads, in one-letter code: MEKYAVFGNPIAHSKSPFIHQQFAQQLHIDYSYDRVLAPVDDFLATLNAFFCEGARGANVTVPFKEDAFERADELTERASLAGAVNTLKRLDDGRLLGDNTDGIGLLSDLERLSFIKPGSRVLLIGAGGASRGVLLPLLSLDCAVTITNRTYSRAKDLATLFAHTGSISAVAMEDLEGHEFDLIINATSSGIAGDVPAIPASLVKAHVYFYDMFYQKGSTPFLSWCEDHGAKHMSDGLGMLVGQAAHAVLLWHGVLPAVEPVIEKLKQELLA.

Shikimate-binding positions include 14–16 and Thr61; that span reads SKS. Lys65 serves as the catalytic Proton acceptor. Glu77 serves as a coordination point for NADP(+). Positions 86 and 102 each coordinate shikimate. NADP(+) contacts are provided by residues 126 to 130, 149 to 154, and Met213; these read GAGGA and NRTYSR. Tyr215 provides a ligand contact to shikimate. An NADP(+)-binding site is contributed by Gly237.

Belongs to the shikimate dehydrogenase family. In terms of assembly, homodimer.

The enzyme catalyses shikimate + NADP(+) = 3-dehydroshikimate + NADPH + H(+). It participates in metabolic intermediate biosynthesis; chorismate biosynthesis; chorismate from D-erythrose 4-phosphate and phosphoenolpyruvate: step 4/7. Functionally, involved in the biosynthesis of the chorismate, which leads to the biosynthesis of aromatic amino acids. Catalyzes the reversible NADPH linked reduction of 3-dehydroshikimate (DHSA) to yield shikimate (SA). The polypeptide is Shikimate dehydrogenase (NADP(+)) (Enterobacter sp. (strain 638)).